The chain runs to 62 residues: Defensin BmKDfsin3 (62 aa).

A signal peptide spans 1–24 (MKTIVILFVLALVFCTLEMGMVEA). 3 disulfides stabilise this stretch: Cys-28-Cys-49, Cys-35-Cys-57, and Cys-39-Cys-59.

It belongs to the invertebrate defensin family. Type 2 subfamily. Low expression in both venom and non-venom glands (hemolymph).

The protein localises to the secreted. Antibacterial peptide active against Gram-positive bacteria (including S.aureus ATCC25923 (MIC=2.5 uM), M.luteus AB93113 (MIC=2.5 uM), and the antibiotic-resistant S.epidermidis PRSE P1389 (MIC=1.25 uM)), but not against Gram-negative bacteria (including E.coli and P.aeruginosa). Also blocks the currents of Kv1.1/KCNA1 (57% inhibition), Kv1.2/KCNA2 (27.5% inhibition), Kv1.3/KCNA3 (IC(50)=23.4 nM, 84.3% inhibition), KCa3.1/KCNN4/IK (15% inhibition), KCa2.3/KCNN3/SK3 (87.5% inhibition) and Kv11.1/KCNH2/ERG1 (30.4% inhibition) channels (tested at 1 uM). It inhibits potassium channel current by interacting with the pore region. The polypeptide is Defensin BmKDfsin3 (Olivierus martensii (Manchurian scorpion)).